Here is a 251-residue protein sequence, read N- to C-terminus: Large ribosomal subunit protein uL16m (251 aa).

The transit peptide at 1 to 29 (MWRLLTRAPAPLWRMHFSDTWAALPTSAG) directs the protein to the mitochondrion.

This sequence belongs to the universal ribosomal protein uL16 family. Component of the mitochondrial ribosome large subunit (39S) which comprises a 16S rRNA and about 50 distinct proteins.

It is found in the mitochondrion. The sequence is that of Large ribosomal subunit protein uL16m (Mrpl16) from Rattus norvegicus (Rat).